The primary structure comprises 223 residues: DNA mismatch repair protein MutH (223 aa).

Belongs to the MutH family.

The protein localises to the cytoplasm. Sequence-specific endonuclease that cleaves unmethylated GATC sequences. It is involved in DNA mismatch repair. The chain is DNA mismatch repair protein MutH from Shewanella baltica (strain OS195).